Here is a 596-residue protein sequence, read N- to C-terminus: Elongation factor 4 (596 aa).

The tr-type G domain occupies 2-184 (KHIRNFSIIA…VIVAQIPPPE (183 aa)). GTP contacts are provided by residues 14 to 19 (DHGKST) and 131 to 134 (NKID).

The protein belongs to the TRAFAC class translation factor GTPase superfamily. Classic translation factor GTPase family. LepA subfamily.

It localises to the cell inner membrane. It catalyses the reaction GTP + H2O = GDP + phosphate + H(+). Functionally, required for accurate and efficient protein synthesis under certain stress conditions. May act as a fidelity factor of the translation reaction, by catalyzing a one-codon backward translocation of tRNAs on improperly translocated ribosomes. Back-translocation proceeds from a post-translocation (POST) complex to a pre-translocation (PRE) complex, thus giving elongation factor G a second chance to translocate the tRNAs correctly. Binds to ribosomes in a GTP-dependent manner. The polypeptide is Elongation factor 4 (Shewanella halifaxensis (strain HAW-EB4)).